Consider the following 368-residue polypeptide: Glutamate 5-kinase (368 aa).

Lys-9 contributes to the ATP binding site. Substrate-binding residues include Ser-49, Asp-136, and Asn-148. ATP-binding positions include 168–169 (TD) and 210–216 (TGGMMTK). A PUA domain is found at 275-353 (AGIITIDNGA…ADIENVLGYE (79 aa)).

It belongs to the glutamate 5-kinase family.

The protein resides in the cytoplasm. It catalyses the reaction L-glutamate + ATP = L-glutamyl 5-phosphate + ADP. The protein operates within amino-acid biosynthesis; L-proline biosynthesis; L-glutamate 5-semialdehyde from L-glutamate: step 1/2. In terms of biological role, catalyzes the transfer of a phosphate group to glutamate to form L-glutamate 5-phosphate. This chain is Glutamate 5-kinase, found in Haemophilus influenzae (strain PittEE).